Consider the following 1035-residue polypeptide: MQISDTGHSHMPDFHAVLAREDWQNQTITHLNRLPAHPAFASWRDELAARDNHLSTRRRQLDGEWQFVYARSPFAVDAQWLTQDLPDSRGTPVPSNWQMEGYDAPIYTNVRYPIDTTPPRVPEDNPTGCYSLHFTVEDTWRENGQTQIIFDGVNSAFHLWCNGVWVGYSQDSRLPAAFDLSPFLRPGDNRLCVMVMRWSAGSWLEDQDMWRMSGIFRSVWLLNKPQQRLCDVQLTPALDALYRDGTLQVQATVEATEAALAGLSVGVSLWRGEEQVAAGRQPLGTPAVDERGHYAERVDFALAVTAPAHWSAETPNCYRAVVTLWRGDELLEAEAWDIGFRRIEIADGLLRLNGKPLLIRGVNRHEHHYLRGQVVTEADMVQDILLMKQNNFNAVRCSHYPNAPRWYELCNRYGLYVVDEANIETHGMVPMNRLSDDPAWLPAFSARVTRMVQSNRNHPCIIIWSLGNESGGGGNHEALYHWLKRNDPSRPVQYEGGGADTTATDIICPMYARVERDQPIPAVPKWGIKKWISLPGEQRPLILCEYAHAMGNSLGNFADYWQAFREYPRLQGGFIWDWADQAIRKIFDDGSVGWAYGGDFGDKPNDRQFCMNGLVFPDRTPHPSLVEAKHAQQYFQFTLLSTSPLRVRITSEYLFRPTDNEVVRWQVQSAGETLYHGNLTLALPPEGSDEITLLDSLILPEGARAVWLTLEVTQPRATDWSEADHRVAWQQFPLPAPLALPAPTVPAGAPDLIVSDEVWQIRAGSQCWTIDRRTGLLSRWSVGGQEQLLTPLRDQFIRAPLDNDIGVSEVERIDPNAWVERWKSAGLYDLEAHCVQCDAQRLANETLVDCRWHYLRGEEVVIVSHWRMHFTADGTLRLAVDGERAETLPPLPRVGLHFQVADQQAPVSWLGLGPHENYPDRRSSACFARWEQPLAAMTTPYIFPTENGLRCDTQALDWGRWHVSGHFHFSVQPWSTRQLMETDHWHKMQAEDGVWITLDGLHMGVGGDDSWTPSVLPQWLLSQTRWQYEFFLRCL.

The substrate site is built by N109 and D208. D208 serves as a coordination point for Na(+). Residues E424, H426, and E469 each coordinate Mg(2+). Residues E469 and 545 to 548 contribute to the substrate site; that span reads EYAH. E469 (proton donor) is an active-site residue. E545 acts as the Nucleophile in catalysis. N605 lines the Mg(2+) pocket. F609 and N612 together coordinate Na(+). 2 residues coordinate substrate: N612 and W1011.

This sequence belongs to the glycosyl hydrolase 2 family. In terms of assembly, homotetramer. It depends on Mg(2+) as a cofactor. Requires Na(+) as cofactor.

The enzyme catalyses Hydrolysis of terminal non-reducing beta-D-galactose residues in beta-D-galactosides.. This is Beta-galactosidase from Klebsiella pneumoniae (strain 342).